Here is a 968-residue protein sequence, read N- to C-terminus: RNA polymerase-associated protein RapA (968 aa).

In terms of domain architecture, Helicase ATP-binding spans 164 to 334 (DVGRRHAPRV…FARLRLLDPN (171 aa)). ATP is bound at residue 177 to 184 (DEVGLGKT). Positions 280–283 (DEAH) match the DEAH box motif. A Helicase C-terminal domain is found at 490-662 (RVEWLMGYLT…YLASPDQTEG (173 aa)).

This sequence belongs to the SNF2/RAD54 helicase family. RapA subfamily. As to quaternary structure, interacts with the RNAP. Has a higher affinity for the core RNAP than for the holoenzyme. Its ATPase activity is stimulated by binding to RNAP.

In terms of biological role, transcription regulator that activates transcription by stimulating RNA polymerase (RNAP) recycling in case of stress conditions such as supercoiled DNA or high salt concentrations. Probably acts by releasing the RNAP, when it is trapped or immobilized on tightly supercoiled DNA. Does not activate transcription on linear DNA. Probably not involved in DNA repair. The polypeptide is RNA polymerase-associated protein RapA (Shigella dysenteriae serotype 1 (strain Sd197)).